A 323-amino-acid polypeptide reads, in one-letter code: Putative HTH-type transcriptional regulatory protein Mbur_1811 (323 aa).

Residues 132–190 (LKEARMNVSMSLGALASELGVSRRTISKYEEGQMDASIDIVLHLEEILDMALAKSIDIL) form the HTH cro/C1-type domain. The segment at residues 143–162 (LGALASELGVSRRTISKYEE) is a DNA-binding region (H-T-H motif).

The polypeptide is Putative HTH-type transcriptional regulatory protein Mbur_1811 (Methanococcoides burtonii (strain DSM 6242 / NBRC 107633 / OCM 468 / ACE-M)).